A 123-amino-acid polypeptide reads, in one-letter code: ATP synthase epsilon chain (123 aa).

The protein belongs to the ATPase epsilon chain family. F-type ATPases have 2 components, CF(1) - the catalytic core - and CF(0) - the membrane proton channel. CF(1) has five subunits: alpha(3), beta(3), gamma(1), delta(1), epsilon(1). CF(0) has three main subunits: a, b and c.

The protein resides in the cell inner membrane. Its function is as follows. Produces ATP from ADP in the presence of a proton gradient across the membrane. The polypeptide is ATP synthase epsilon chain (Helicobacter pylori (strain Shi470)).